The primary structure comprises 298 residues: MVQIIDGKAVAATILEKVTRETQDLKANGVTPGLAVVIVGEDPASQVYVASKGRKATECGFHSVQHSLPENTSEEELVSLVEALNRDPAIHGILVQLPLPKQIDSERIIHTIAPEKDVDGFHILNVGMLGTGAVTKALVPCTPAGAMLLIEGVRGKDLSGLSAVVIGRSNIVGKPMANLLLAANATVTIAHSRTADLPAACRGADILVAAVGRPEMVKGDWIKPGATVIDVGVSRIPAPEKGEGKMKLVGDVAYAEAEKVAGAITPVPGGVGPMTIAMLMANTLAAASKASGRDLPAF.

Residues 167–169 (GRS), serine 192, and valine 233 contribute to the NADP(+) site.

It belongs to the tetrahydrofolate dehydrogenase/cyclohydrolase family. As to quaternary structure, homodimer.

It carries out the reaction (6R)-5,10-methylene-5,6,7,8-tetrahydrofolate + NADP(+) = (6R)-5,10-methenyltetrahydrofolate + NADPH. The enzyme catalyses (6R)-5,10-methenyltetrahydrofolate + H2O = (6R)-10-formyltetrahydrofolate + H(+). Its pathway is one-carbon metabolism; tetrahydrofolate interconversion. Its function is as follows. Catalyzes the oxidation of 5,10-methylenetetrahydrofolate to 5,10-methenyltetrahydrofolate and then the hydrolysis of 5,10-methenyltetrahydrofolate to 10-formyltetrahydrofolate. This Chelativorans sp. (strain BNC1) protein is Bifunctional protein FolD.